The chain runs to 391 residues: Casein kinase II subunit alpha 3 (391 aa).

A Protein kinase domain is found at 39-324 (YQLVRKLGRG…AREAMEHPYF (286 aa)). ATP-binding positions include 45–53 (LGRGKYSEV) and Lys68. Asp156 acts as the Proton acceptor in catalysis.

The protein belongs to the protein kinase superfamily. Ser/Thr protein kinase family. CK2 subfamily. Heterotetramer composed of two catalytic subunits (alpha chain and/or alpha' chain) and two regulatory subunits (beta chains). Interacts with PML. As to expression, detected in blood platelets and megakaryocyte cell lines. Poorly expressed in lung. Highly expressed in lung tumor tissues.

It catalyses the reaction L-seryl-[protein] + ATP = O-phospho-L-seryl-[protein] + ADP + H(+). The enzyme catalyses L-threonyl-[protein] + ATP = O-phospho-L-threonyl-[protein] + ADP + H(+). In terms of biological role, probable catalytic subunit of a constitutively active serine/threonine-protein kinase complex that phosphorylates a large number of substrates containing acidic residues C-terminal to the phosphorylated serine or threonine. Amplification-dependent oncogene; promotes cell proliferation and tumorigenesis by down-regulating expression of the tumor suppressor protein, PML. May play a role in the pathogenesis of the lung cancer development and progression. The sequence is that of Casein kinase II subunit alpha 3 (CSNK2A3) from Homo sapiens (Human).